The chain runs to 118 residues: Large ribosomal subunit protein uL18 (118 aa).

Belongs to the universal ribosomal protein uL18 family. As to quaternary structure, part of the 50S ribosomal subunit; part of the 5S rRNA/L5/L18/L25 subcomplex. Contacts the 5S and 23S rRNAs.

This is one of the proteins that bind and probably mediate the attachment of the 5S RNA into the large ribosomal subunit, where it forms part of the central protuberance. The sequence is that of Large ribosomal subunit protein uL18 from Ligilactobacillus salivarius (strain UCC118) (Lactobacillus salivarius).